The primary structure comprises 458 residues: ATP synthase subunit beta (458 aa).

Residue 148–155 participates in ATP binding; sequence GGAGVGKT.

The protein belongs to the ATPase alpha/beta chains family. In terms of assembly, F-type ATPases have 2 components, CF(1) - the catalytic core - and CF(0) - the membrane proton channel. CF(1) has five subunits: alpha(3), beta(3), gamma(1), delta(1), epsilon(1). CF(0) has three main subunits: a(1), b(2) and c(9-12). The alpha and beta chains form an alternating ring which encloses part of the gamma chain. CF(1) is attached to CF(0) by a central stalk formed by the gamma and epsilon chains, while a peripheral stalk is formed by the delta and b chains.

The protein resides in the cell inner membrane. The catalysed reaction is ATP + H2O + 4 H(+)(in) = ADP + phosphate + 5 H(+)(out). Produces ATP from ADP in the presence of a proton gradient across the membrane. The catalytic sites are hosted primarily by the beta subunits. This chain is ATP synthase subunit beta, found in Francisella tularensis subsp. mediasiatica (strain FSC147).